The chain runs to 398 residues: Beta-1,6-galactosyltransferase GALT29A (398 aa).

The Cytoplasmic segment spans residues 1–6 (MKRSVR). A helical; Signal-anchor for type II membrane protein membrane pass occupies residues 7–27 (PLFSALLFAFFAATLICRVAI). Over 28–398 (RRSSFSFASA…FKIPLVQVYH (371 aa)) the chain is Lumenal. 2 N-linked (GlcNAc...) asparagine glycosylation sites follow: N221 and N346.

This sequence belongs to the glycosyltransferase 29 family. Interacts with GALT31A.

It localises to the golgi apparatus membrane. Galactosyltransferase involved in the biosynthesis of type II arabinogalactan. Possesses galactosyltransferase (GalT) activity in vitro, transferring galactose from UDP-galactose to a mixture of various oligosaccharides derived from arabinogalactan proteins. Forms a complex with GALT31A that can work cooperatively to enhance the activities of adding galactose residues at O6 positions to beta-1,6-galactan and beta-1,3-galactan. The chain is Beta-1,6-galactosyltransferase GALT29A from Arabidopsis thaliana (Mouse-ear cress).